A 198-amino-acid chain; its full sequence is Putative 3-methyladenine DNA glycosylase (198 aa).

The protein belongs to the DNA glycosylase MPG family.

The chain is Putative 3-methyladenine DNA glycosylase from Rhizobium johnstonii (strain DSM 114642 / LMG 32736 / 3841) (Rhizobium leguminosarum bv. viciae).